Reading from the N-terminus, the 144-residue chain is MLMPKRVKYRKPHRPGTQGKATRGNEVTFGDYGLQALEPAWITSRQIEASRIAMTRYIKRGGKVWIKIFPDTPITAKPAETRMGSGKGAPEYWVAVVKPGRILFEMAGVSEEVAREAMRLAAHKLPIKTKFVKRTGLGGDANEG.

The segment covering 1-14 has biased composition (basic residues); it reads MLMPKRVKYRKPHR. The interval 1–25 is disordered; sequence MLMPKRVKYRKPHRPGTQGKATRGN.

It belongs to the universal ribosomal protein uL16 family. In terms of assembly, part of the 50S ribosomal subunit.

Binds 23S rRNA and is also seen to make contacts with the A and possibly P site tRNAs. The chain is Large ribosomal subunit protein uL16 from Moorella thermoacetica (strain ATCC 39073 / JCM 9320).